A 41-amino-acid polypeptide reads, in one-letter code: Bacteriocin (41 aa).

Cysteine 9 and cysteine 14 are disulfide-bonded.

Its subcellular location is the secreted. Functionally, bacteriocin active against S.aureus, S.typhi, B.thuringiensis, Klebsiella sp., E.coli KL16 and E.coli Gj137. The chain is Bacteriocin from Lactococcus sp.